The chain runs to 94 residues: Putative testis-specific prion protein (94 aa).

Positions 1–18 (MQHSLVFFFAVILHLSHL) are cleaved as a signal peptide. Residue N44 is glycosylated (N-linked (GlcNAc...) asparagine).

In terms of tissue distribution, specifically expressed in adult testis.

The protein localises to the secreted. This Homo sapiens (Human) protein is Putative testis-specific prion protein (PRNT).